A 60-amino-acid chain; its full sequence is Large ribosomal subunit protein bL32 (60 aa).

The span at 1 to 16 (MAVPKRKTSPSKRGMR) shows a compositional bias: basic residues. The disordered stretch occupies residues 1–60 (MAVPKRKTSPSKRGMRRSADALKAPTYVEDKNSGEMRRPHHIDLKTGMYRGRQVLTPKES). A compositionally biased stretch (basic and acidic residues) spans 28–44 (VEDKNSGEMRRPHHIDL).

Belongs to the bacterial ribosomal protein bL32 family.

This is Large ribosomal subunit protein bL32 from Mesorhizobium japonicum (strain LMG 29417 / CECT 9101 / MAFF 303099) (Mesorhizobium loti (strain MAFF 303099)).